The following is a 456-amino-acid chain: Coenzyme F420 hydrogenase subunit alpha (456 aa).

Ni(2+) is bound by residues C63, C66, C432, and C435.

This sequence belongs to the [NiFe]/[NiFeSe] hydrogenase large subunit family. Pentamer of two alpha chains, two beta chains and a gamma chain. It depends on Ni(2+) as a cofactor. Iron-sulfur cluster serves as cofactor. FAD is required as a cofactor.

It is found in the cell membrane. The catalysed reaction is oxidized coenzyme F420-(gamma-L-Glu)(n) + H2 + H(+) = reduced coenzyme F420-(gamma-L-Glu)(n). Its function is as follows. Reduces the physiological low-potential two-electron acceptor coenzyme F420, and the artificial one-electron acceptor methylviologen. The polypeptide is Coenzyme F420 hydrogenase subunit alpha (frhA) (Methanosarcina barkeri (strain Fusaro / DSM 804)).